A 359-amino-acid polypeptide reads, in one-letter code: Phospho-N-acetylmuramoyl-pentapeptide-transferase (359 aa).

Transmembrane regions (helical) follow at residues 3-23 (QILI…PVLI), 55-75 (VAII…GVLM), 84-104 (GLLV…DDLI), 117-137 (TAKT…ALQF), 156-176 (IATV…VVSA), 190-210 (LAAG…FWQF), 231-251 (LAII…WNAA), 255-275 (IFMG…LSVT), 283-303 (VVLG…ILAF), and 330-350 (VIIR…ALFY).

It belongs to the glycosyltransferase 4 family. MraY subfamily. Requires Mg(2+) as cofactor.

The protein localises to the cell membrane. It catalyses the reaction UDP-N-acetyl-alpha-D-muramoyl-L-alanyl-gamma-D-glutamyl-meso-2,6-diaminopimeloyl-D-alanyl-D-alanine + di-trans,octa-cis-undecaprenyl phosphate = di-trans,octa-cis-undecaprenyl diphospho-N-acetyl-alpha-D-muramoyl-L-alanyl-D-glutamyl-meso-2,6-diaminopimeloyl-D-alanyl-D-alanine + UMP. Its pathway is cell wall biogenesis; peptidoglycan biosynthesis. Functionally, catalyzes the initial step of the lipid cycle reactions in the biosynthesis of the cell wall peptidoglycan: transfers peptidoglycan precursor phospho-MurNAc-pentapeptide from UDP-MurNAc-pentapeptide onto the lipid carrier undecaprenyl phosphate, yielding undecaprenyl-pyrophosphoryl-MurNAc-pentapeptide, known as lipid I. The sequence is that of Phospho-N-acetylmuramoyl-pentapeptide-transferase from Mycolicibacterium gilvum (strain PYR-GCK) (Mycobacterium gilvum (strain PYR-GCK)).